The primary structure comprises 863 residues: MKALRRFTVRAHLPERLAALDQLSTNLRWSWDKPTQDLFAAIDPALWEQCGHDPVALLGAVNPARLDELALDAEFLGALDELAADLNDYLSRPLWYQEQQDAGVAAQALPTGIAYFSLEFGVAEVLPNYSGGLGILAGDHLKSASDLGVPLIAVGLYYRSGYFRQSLTADGWQHETYPSLDPQGLPLRLLTDANGDPVLVEVALGDNAVLRARIWVAQVGRVPLLLLDSDIPENEHDLRNVTDRLYGGDQEHRIEQEILAGIGGVRAIRAYTAVEKLTPPEVFHMNEGHAGFLGIERIRELVTDAGLDFDTALTVVRSSTVFTTHTPVPAGIDRFPLEMVQRYVNDQRGDGRSRLLPGLPADRIVALGAEDDPAKFNMAHMGLRLAQRANGVSLLHGRVSRAMFNELWAGFDPDEVPIGSVTNGVHAPTWAAPQWLQLGRELAGSDSLREPVVWQRLHQVDPAHLWWIRSQLRSMLVEDVRARLRQSWLERGATDAELGWIATAFDPNVLTVGFARRVPTYKRLTLMLRDPDRLEQLLLDEQRPIQLIVAGKSHPADDGGKALIQQVVRFADRPQVRHRIAFLPNYDMSMARLLYWGCDVWLNNPLRPLEACGTSGMKSALNGGLNLSIRDGWWDEWYDGENGWEIPSADGVADENRRDDLEAGALYDLLAQAVAPKFYERDERGVPQRWVEMVRHTLQTLGPKVLASRMVRDYVEHYYAPAAQSFRRTAGAQFDAARELADYRRRAEEAWPKIEIADVDSTGLPDTPLLGSQLTLTATVRLAGLRPNDVTVQGVLGRVDAGDVLMDPVTVEMAHTGTGDGGYEIFSTTTPLPLAGPVGYTVRVLPRHPMLAASNELGLVTLA.

Lys618 carries the post-translational modification N6-(pyridoxal phosphate)lysine.

The protein belongs to the glycogen phosphorylase family. Pyridoxal 5'-phosphate is required as a cofactor.

The enzyme catalyses [(1-&gt;4)-alpha-D-glucosyl](n) + phosphate = [(1-&gt;4)-alpha-D-glucosyl](n-1) + alpha-D-glucose 1-phosphate. In terms of biological role, phosphorylase is an important allosteric enzyme in carbohydrate metabolism. Enzymes from different sources differ in their regulatory mechanisms and in their natural substrates. However, all known phosphorylases share catalytic and structural properties. The chain is Glycogen phosphorylase (glgP) from Mycobacterium tuberculosis (strain CDC 1551 / Oshkosh).